The primary structure comprises 621 residues: Phytoene desaturase (621 aa).

The N-terminal stretch at 1-23 (MPSTSKRPTAIVIGSGVGGVSTA) is a signal peptide. Residues 394 to 425 (HASQAHQLSASRNGHISSASPPDQPGLTPTEK) are disordered. Over residues 397-414 (QAHQLSASRNGHISSASP) the composition is skewed to polar residues. The helical transmembrane segment at 598-618 (WEQWVSVLIYLLVGIFAWLWM) threads the bilayer.

The protein belongs to the carotenoid/retinoid oxidoreductase family. Requires NAD(+) as cofactor.

The protein localises to the membrane. It carries out the reaction 15-cis-phytoene + 5 A = all-trans-3,4-didehydrolycopene + 5 AH2. It participates in carotenoid biosynthesis; lycopene biosynthesis. Functionally, phytoene desaturase involved in the carotenoid biosynthesis pathway. Converts phytoene into 3,4-didehydrolycopene via the intermediary of phytofluene, zeta-carotene, neurosporene and lycopene, by introducing up to five double bonds into phytoene. This is Phytoene desaturase (PDH1) from Cercospora nicotianae (Barn spot disease fungus).